The chain runs to 469 residues: Probable ribonuclease FAU-1 (469 aa).

Belongs to the FAU-1 family.

Functionally, probable RNase involved in rRNA stability through maturation and/or degradation of precursor rRNAs. Binds to RNA in loop regions with AU-rich sequences. The protein is Probable ribonuclease FAU-1 of Pyrococcus horikoshii (strain ATCC 700860 / DSM 12428 / JCM 9974 / NBRC 100139 / OT-3).